The following is a 200-amino-acid chain: Potassium-transporting ATPase KdpC subunit (200 aa).

A helical transmembrane segment spans residues 6–26 (PAVVLLILLTLITGIAYPLLT).

This sequence belongs to the KdpC family. The system is composed of three essential subunits: KdpA, KdpB and KdpC.

Its subcellular location is the cell inner membrane. Its function is as follows. Part of the high-affinity ATP-driven potassium transport (or Kdp) system, which catalyzes the hydrolysis of ATP coupled with the electrogenic transport of potassium into the cytoplasm. This subunit acts as a catalytic chaperone that increases the ATP-binding affinity of the ATP-hydrolyzing subunit KdpB by the formation of a transient KdpB/KdpC/ATP ternary complex. In Yersinia enterocolitica serotype O:8 / biotype 1B (strain NCTC 13174 / 8081), this protein is Potassium-transporting ATPase KdpC subunit.